A 219-amino-acid polypeptide reads, in one-letter code: Cytidylate kinase (219 aa).

15 to 23 serves as a coordination point for ATP; the sequence is GPAASGKGT.

It belongs to the cytidylate kinase family. Type 1 subfamily.

It is found in the cytoplasm. The catalysed reaction is CMP + ATP = CDP + ADP. The enzyme catalyses dCMP + ATP = dCDP + ADP. The protein is Cytidylate kinase of Brucella abortus (strain S19).